The primary structure comprises 173 residues: Succinate dehydrogenase assembly factor 3, mitochondrial (173 aa).

A mitochondrion-targeting transit peptide spans 1–59 (MFRPSTSLALRSTLRQLASASNQPIPPGSEINAVKRTVATILPPIRLYRRIIRAHRRLD). Positions 149–173 (FPPEKQRELAEKAAADAGLSVKKDE) are disordered. Positions 152-162 (EKQRELAEKAA) are enriched in basic and acidic residues.

It belongs to the complex I LYR family. SDHAF3 subfamily. Interacts with the iron-sulfur protein subunit within the SDH catalytic dimer.

The protein localises to the mitochondrion matrix. Functionally, plays an essential role in the assembly of succinate dehydrogenase (SDH), an enzyme complex (also referred to as respiratory complex II) that is a component of both the tricarboxylic acid (TCA) cycle and the mitochondrial electron transport chain, and which couples the oxidation of succinate to fumarate with the reduction of ubiquinone (coenzyme Q) to ubiquinol. Promotes maturation of the iron-sulfur protein subunit of the SDH catalytic dimer, protecting it from the deleterious effects of oxidants. May act together with SDHAF1. This chain is Succinate dehydrogenase assembly factor 3, mitochondrial, found in Mycosarcoma maydis (Corn smut fungus).